The primary structure comprises 51 residues: Small ribosomal subunit protein uS13 (51 aa).

This sequence belongs to the universal ribosomal protein uS13 family. Part of the 30S ribosomal subunit. Forms a loose heterodimer with protein S19. Forms two bridges to the 50S subunit in the 70S ribosome.

Located at the top of the head of the 30S subunit, it contacts several helices of the 16S rRNA. In the 70S ribosome it contacts the 23S rRNA (bridge B1a) and protein L5 of the 50S subunit (bridge B1b), connecting the 2 subunits; these bridges are implicated in subunit movement. Contacts the tRNAs in the A and P-sites. The polypeptide is Small ribosomal subunit protein uS13 (rpsM) (Lactococcus lactis subsp. cremoris (Streptococcus cremoris)).